The primary structure comprises 778 residues: Endonuclease MutS2 (778 aa).

328–335 (GPNTGGKT) is a binding site for ATP. The region spanning 702-777 (LDLRGKRYEE…GSGATIVTFK (76 aa)) is the Smr domain.

The protein belongs to the DNA mismatch repair MutS family. MutS2 subfamily. As to quaternary structure, homodimer. Binds to stalled ribosomes, contacting rRNA.

Endonuclease that is involved in the suppression of homologous recombination and thus may have a key role in the control of bacterial genetic diversity. Functionally, acts as a ribosome collision sensor, splitting the ribosome into its 2 subunits. Detects stalled/collided 70S ribosomes which it binds and splits by an ATP-hydrolysis driven conformational change. Acts upstream of the ribosome quality control system (RQC), a ribosome-associated complex that mediates the extraction of incompletely synthesized nascent chains from stalled ribosomes and their subsequent degradation. Probably generates substrates for RQC. This Streptococcus pneumoniae (strain Taiwan19F-14) protein is Endonuclease MutS2.